The following is a 212-amino-acid chain: Transmembrane emp24 domain-containing protein p24delta4 (212 aa).

The signal sequence occupies residues 1 to 25; sequence MKKKMIPTTILLSALIFSLSPICEA. Over 26–179 the chain is Lumenal; it reads VWLTVPHTGS…RIVSEKTNSR (154 aa). The GOLD domain occupies 35 to 147; that stretch reads SKCVSEEIQS…IEGVELEFKK (113 aa). N-linked (GlcNAc...) asparagine glycosylation occurs at Asn82. A coiled-coil region spans residues 133–155; the sequence is ARKEKIEGVELEFKKLEGAVEAI. Omega-N-methylated arginine is present on residues Arg165 and Arg170. Residues 180–200 traverse the membrane as a helical segment; sequence VAWYSIMSLGICIVVSGLQIL. Residues 201–212 are Cytoplasmic-facing; that stretch reads YLKQYFEKKKLI. Positions 205–206 match the COPII vesicle coat-binding motif; it reads YF. The COPI vesicle coat-binding motif lies at 205–212; the sequence is YFEKKKLI.

The protein belongs to the EMP24/GP25L family. In terms of assembly, probably oligomerizes with other members of the EMP24/GP25L family. Associates with the COPI vesicle coat (coatomer). Associates with the COPII vesicle coat (coatomer).

It is found in the endoplasmic reticulum membrane. It localises to the golgi apparatus membrane. In terms of biological role, involved in vesicular protein trafficking. Mainly functions in the early secretory pathway. Required for trafficking GLL23, a component of the PYK10 complex. May act as a receptor facilitating its packing into COPII carriers and export from the endoplasmic reticulum. The sequence is that of Transmembrane emp24 domain-containing protein p24delta4 (CYB) from Arabidopsis thaliana (Mouse-ear cress).